The following is a 316-amino-acid chain: Pyridoxal 5'-phosphate synthase subunit PdxS (316 aa).

Asp44 is a binding site for D-ribose 5-phosphate. Lys101 acts as the Schiff-base intermediate with D-ribose 5-phosphate in catalysis. A D-ribose 5-phosphate-binding site is contributed by Gly173. Residue Lys185 participates in D-glyceraldehyde 3-phosphate binding. D-ribose 5-phosphate is bound by residues Gly234 and 255–256; that span reads GS.

It belongs to the PdxS/SNZ family. In the presence of PdxT, forms a dodecamer of heterodimers.

The enzyme catalyses aldehydo-D-ribose 5-phosphate + D-glyceraldehyde 3-phosphate + L-glutamine = pyridoxal 5'-phosphate + L-glutamate + phosphate + 3 H2O + H(+). It participates in cofactor biosynthesis; pyridoxal 5'-phosphate biosynthesis. Its function is as follows. Catalyzes the formation of pyridoxal 5'-phosphate from ribose 5-phosphate (RBP), glyceraldehyde 3-phosphate (G3P) and ammonia. The ammonia is provided by the PdxT subunit. Can also use ribulose 5-phosphate and dihydroxyacetone phosphate as substrates, resulting from enzyme-catalyzed isomerization of RBP and G3P, respectively. This is Pyridoxal 5'-phosphate synthase subunit PdxS from Sulfurisphaera tokodaii (strain DSM 16993 / JCM 10545 / NBRC 100140 / 7) (Sulfolobus tokodaii).